The sequence spans 194 residues: Ribonuclease HII (194 aa).

Positions 3 to 193 (ILTAGVDEAG…VRNLLAQQAL (191 aa)) constitute an RNase H type-2 domain. The a divalent metal cation site is built by D9, E10, and D101.

This sequence belongs to the RNase HII family. The cofactor is Mn(2+). Mg(2+) serves as cofactor.

It is found in the cytoplasm. The enzyme catalyses Endonucleolytic cleavage to 5'-phosphomonoester.. In terms of biological role, endonuclease that specifically degrades the RNA of RNA-DNA hybrids. The chain is Ribonuclease HII (rnhB) from Neisseria meningitidis serogroup B (strain ATCC BAA-335 / MC58).